A 391-amino-acid polypeptide reads, in one-letter code: MDRVRPLAGGRNVRIREAVLNIDPYVPGKSKEEIAREYGIEPDEIVKLGSNENPLGPSPKAVKAAKRELERLHEYPEPLAPPSLYEAIIDYLADPPYPAGEPVEITREHLVVGGDGADEIIDVLTRVLVDPGDPVVIPVPTFSQYGISARACGAEVRKPRFDPERGFELDEDSLFEALDREVRLVYLCTPNNPTGNRIRERVVRDVVEECRGVVLIDHAYVEFADHDYTPLALEYDNVLVLRTCSKALGLAGARVGYGIANPELIEHLHRIKPVFSLTRPSAAAAEATFRDRDYIEKSVRLMIESRKYLYRELRKLDRLTPFPSEANYLLVDVSNTGMNASEFTEELLKRGVIVRDCSSFEGIEPFYVRVSTGTLEEDRKFIEVVKDVLEV.

N6-(pyridoxal phosphate)lysine is present on Lys246.

This sequence belongs to the class-II pyridoxal-phosphate-dependent aminotransferase family. Histidinol-phosphate aminotransferase subfamily. It depends on pyridoxal 5'-phosphate as a cofactor.

It catalyses the reaction L-histidinol phosphate + 2-oxoglutarate = 3-(imidazol-4-yl)-2-oxopropyl phosphate + L-glutamate. It participates in amino-acid biosynthesis; L-histidine biosynthesis; L-histidine from 5-phospho-alpha-D-ribose 1-diphosphate: step 7/9. The protein is Histidinol-phosphate aminotransferase of Methanopyrus kandleri (strain AV19 / DSM 6324 / JCM 9639 / NBRC 100938).